Here is a 309-residue protein sequence, read N- to C-terminus: Malate dehydrogenase (309 aa).

NAD(+) contacts are provided by residues 10–15 and D34; that span reads GAGNVG. Substrate-binding residues include R83 and R89. NAD(+) contacts are provided by residues N96 and 119-121; that span reads VSN. 2 residues coordinate substrate: N121 and R152. H176 functions as the Proton acceptor in the catalytic mechanism.

This sequence belongs to the LDH/MDH superfamily. MDH type 3 family.

The enzyme catalyses (S)-malate + NAD(+) = oxaloacetate + NADH + H(+). Catalyzes the reversible oxidation of malate to oxaloacetate. This Heliobacterium modesticaldum (strain ATCC 51547 / Ice1) protein is Malate dehydrogenase.